We begin with the raw amino-acid sequence, 259 residues long: Undecaprenyl-diphosphatase 4 (259 aa).

The next 8 membrane-spanning stretches (helical) occupy residues 1-21 (MNWL…FLPI), 39-59 (AGLF…FIYY), 71-91 (FSKL…IGLL), 99-119 (ISKT…FLYM), 133-153 (ITYK…FPAI), 173-193 (AAYF…ILQF), 208-228 (SLIV…SWMI), and 239-259 (FAYY…THVF).

The protein belongs to the UppP family.

It is found in the cell membrane. It catalyses the reaction di-trans,octa-cis-undecaprenyl diphosphate + H2O = di-trans,octa-cis-undecaprenyl phosphate + phosphate + H(+). Functionally, catalyzes the dephosphorylation of undecaprenyl diphosphate (UPP). Confers resistance to bacitracin. The polypeptide is Undecaprenyl-diphosphatase 4 (Bacillus thuringiensis (strain Al Hakam)).